Reading from the N-terminus, the 616-residue chain is Membrane protein insertase YidC (616 aa).

Residues 9–29 traverse the membrane as a helical segment; that stretch reads ILAVILSGLVLIAWQYFYNVP. A disordered region spans residues 37–80; that stretch reads QQQAQAELQKTTPQPTASATPGATPQSGGAAQPSTPAAGQQAQP. The segment covering 44–71 has biased composition (polar residues); that stretch reads LQKTTPQPTASATPGATPQSGGAAQPST. The next 4 helical transmembrane spans lie at 388–408, 462–482, 520–540, and 559–579; these read FFGN…LLFF, LPVV…FVTI, VFGH…TMWF, and WMPL…VIYW.

This sequence belongs to the OXA1/ALB3/YidC family. Type 1 subfamily. As to quaternary structure, interacts with the Sec translocase complex via SecD. Specifically interacts with transmembrane segments of nascent integral membrane proteins during membrane integration.

The protein resides in the cell inner membrane. In terms of biological role, required for the insertion and/or proper folding and/or complex formation of integral membrane proteins into the membrane. Involved in integration of membrane proteins that insert both dependently and independently of the Sec translocase complex, as well as at least some lipoproteins. Aids folding of multispanning membrane proteins. The sequence is that of Membrane protein insertase YidC from Bradyrhizobium diazoefficiens (strain JCM 10833 / BCRC 13528 / IAM 13628 / NBRC 14792 / USDA 110).